The sequence spans 367 residues: Probable cinnamyl alcohol dehydrogenase (367 aa).

C47 contacts Zn(2+). An NADP(+)-binding site is contributed by T49. Zn(2+)-binding residues include H69, E70, C100, C103, C106, C114, and C163. Residues T167, 188-193 (GLGGVG), 211-216 (SSSSKK), T251, G275, and 298-300 (SFI) contribute to the NADP(+) site.

It belongs to the zinc-containing alcohol dehydrogenase family. As to quaternary structure, homodimer. It depends on Zn(2+) as a cofactor.

It catalyses the reaction (E)-cinnamyl alcohol + NADP(+) = (E)-cinnamaldehyde + NADPH + H(+). It carries out the reaction (E)-coniferol + NADP(+) = (E)-coniferaldehyde + NADPH + H(+). The catalysed reaction is (E)-sinapyl alcohol + NADP(+) = (E)-sinapaldehyde + NADPH + H(+). The enzyme catalyses (E)-4-coumaroyl alcohol + NADP(+) = (E)-4-coumaraldehyde + NADPH + H(+). It catalyses the reaction (E)-caffeyl alcohol + NADP(+) = (E)-caffeyl aldehyde + NADPH + H(+). The protein operates within aromatic compound metabolism; phenylpropanoid biosynthesis. Involved in lignin biosynthesis. May catalyze the final step specific for the production of lignin monomers, like coniferyl alcohol, sinapyl alcohol and 4-coumaryl alcohol. In Zea mays (Maize), this protein is Probable cinnamyl alcohol dehydrogenase.